Reading from the N-terminus, the 268-residue chain is MCERSLYRAGYVGSLLNLQSPDSFYFSNLRANGSQLAALPPISYPRSALPWATTPASCTPAQPATASAFGGFSQPYLTGSGPIGLQSPGAKDGPEDQVKFYTPDAPTASEERSRTRPPFAPESSLVHSALKGTKYDYAGVGRTAPGSATLLQGAPCASSFKEDTKGPLNLNMAVQVAGVASCLRSSLPDGLPWGAAPGRARKKRKPYTKQQIAELENEFLVNEFINRQKRKELSNRLNLSDQQVKIWFQNRRMKKKRVVQREQALALY.

The disordered stretch occupies residues 102 to 124 (TPDAPTASEERSRTRPPFAPESS). Positions 200 to 259 (ARKKRKPYTKQQIAELENEFLVNEFINRQKRKELSNRLNLSDQQVKIWFQNRRMKKKRVV) form a DNA-binding region, homeobox.

The protein belongs to the Abd-B homeobox family.

It is found in the nucleus. Functionally, sequence-specific transcription factor which is part of a developmental regulatory system that provides cells with specific positional identities on the anterior-posterior axis. The polypeptide is Homeobox protein Hox-D12 (Hoxd12) (Mus musculus (Mouse)).